A 302-amino-acid chain; its full sequence is Mitochondrial adapter protein MCP1 (302 aa).

Residues Met1–Arg35 are disordered. Residues Met1–Ser61 are Cytoplasmic-facing. A PxP motif is present at residues Leu4–Val12. Residues Val62 to Val82 form a helical membrane-spanning segment. Residues Ser83–Pro100 are Mitochondrial intermembrane-facing. Residues Ser101–Leu121 form a helical membrane-spanning segment. The Cytoplasmic portion of the chain corresponds to Arg122–Gln173. Residues Val174–Val194 form a helical membrane-spanning segment. The Mitochondrial intermembrane portion of the chain corresponds to Pro195 to Lys219. A helical membrane pass occupies residues Trp220–Ser240. Topologically, residues Gly241–Ser258 are cytoplasmic. The chain crosses the membrane as a helical span at residues Thr259 to Met276. Residues Lys277–Asn302 lie on the Mitochondrial intermembrane side of the membrane.

Interacts (via PxP motif) with VPS13 (via SHR-BD domain).

The protein localises to the mitochondrion outer membrane. Recruits the lipid transfer protein Vps13 to mitochondria thereby promoting vacuole-mitochondria contacts. Involved in mitochondrial lipid homeostasis. This Saccharomyces cerevisiae (strain ATCC 204508 / S288c) (Baker's yeast) protein is Mitochondrial adapter protein MCP1.